Here is a 340-residue protein sequence, read N- to C-terminus: MLDPRARTLLKTLIERYIADGQPVGSRTLSRYSGLELSPATIRNVMSDLEELGLVSSPHTSAGRVPTPRGYRLFVDTMLTVESPIDSDAVTRLVQTTLQAGEPQQKVVAAAASVLSNLSQFAGVVLTPRRSHVFKQIEFLRLSDKRILLIIVTPEGDVQNRMIATQRDYSPAQLTEASNYINAHFAGLSFDEVRRRLRGEIDELRGDMTALMHAAVTASTEEPADEETVLISGERNLLEVADLSSDMARLRKLFDVFDQKTSLLQLLDVSSHAQGVQIFIGGESTLVPIDEMSVVTAPYEVNGKIVGTLGVIGPTRMAYNRVIPIVDITARLLSLTLSQQ.

It belongs to the HrcA family.

Negative regulator of class I heat shock genes (grpE-dnaK-dnaJ and groELS operons). Prevents heat-shock induction of these operons. This chain is Heat-inducible transcription repressor HrcA, found in Burkholderia thailandensis (strain ATCC 700388 / DSM 13276 / CCUG 48851 / CIP 106301 / E264).